The primary structure comprises 217 residues: 3,4-dihydroxy-2-butanone 4-phosphate synthase (217 aa).

D-ribulose 5-phosphate contacts are provided by residues 37–38, aspartate 42, 150–154, and glutamate 174; these read RE and RRGHT. Glutamate 38 contributes to the Mg(2+) binding site. Histidine 153 is a Mg(2+) binding site.

The protein belongs to the DHBP synthase family. In terms of assembly, homodimer. Requires Mg(2+) as cofactor. Mn(2+) serves as cofactor.

The catalysed reaction is D-ribulose 5-phosphate = (2S)-2-hydroxy-3-oxobutyl phosphate + formate + H(+). The protein operates within cofactor biosynthesis; riboflavin biosynthesis; 2-hydroxy-3-oxobutyl phosphate from D-ribulose 5-phosphate: step 1/1. Catalyzes the conversion of D-ribulose 5-phosphate to formate and 3,4-dihydroxy-2-butanone 4-phosphate. This is 3,4-dihydroxy-2-butanone 4-phosphate synthase from Yersinia pseudotuberculosis serotype O:1b (strain IP 31758).